Consider the following 1240-residue polypeptide: ATP-dependent helicase/nuclease subunit A (1240 aa).

The region spanning 12–485 (SQWTDDQWKA…IDLAKNFRSR (474 aa)) is the UvrD-like helicase ATP-binding domain. 33-40 (AAAGSGKT) lines the ATP pocket. The region spanning 497 to 804 (KQIMGEEVGE…RIMTIHKSKG (308 aa)) is the UvrD-like helicase C-terminal domain.

The protein belongs to the helicase family. AddA subfamily. In terms of assembly, heterodimer of AddA and AddB/RexB. It depends on Mg(2+) as a cofactor.

The enzyme catalyses Couples ATP hydrolysis with the unwinding of duplex DNA by translocating in the 3'-5' direction.. It catalyses the reaction ATP + H2O = ADP + phosphate + H(+). Functionally, the heterodimer acts as both an ATP-dependent DNA helicase and an ATP-dependent, dual-direction single-stranded exonuclease. Recognizes the chi site generating a DNA molecule suitable for the initiation of homologous recombination. The AddA nuclease domain is required for chi fragment generation; this subunit has the helicase and 3' -&gt; 5' nuclease activities. This is ATP-dependent helicase/nuclease subunit A from Bacillus cereus (strain AH820).